Here is a 308-residue protein sequence, read N- to C-terminus: MANVTPDLVKALFVGFGKNFKDGLAKAPSQYTEIATVVKSTTASNTYAWLGQMPGLTEWIGDRTLTAIQSHGYSIVNKKWANGVEIQRTDIEDDNVGVYSPLIEELGRAAGEKADELVFGALTAGFKTACYDGQYFFDTDHPVGANVDGTNQKSVSNITDDSTGVTEANAWYLLDCSRSLKPIIYQERKAPTPAQITDANDEKVFMKDVFTYGVDSRSNVGYGFWQMAHAVKGKLTAENLWKAIEAMRAVRGDGDKRLAIRPTHIVVPPSLAQAATKLLERELRAEDGVAVDNEFKRMNLKLIVGDYL.

To phage Mu protein T.

The sequence is that of Mu-like prophage FluMu major head subunit from Haemophilus influenzae (strain ATCC 51907 / DSM 11121 / KW20 / Rd).